Reading from the N-terminus, the 130-residue chain is 3-aminoacrylate deaminase RutC (130 aa).

It belongs to the RutC family.

It catalyses the reaction (Z)-3-aminoacrylate + H2O + H(+) = 3-oxopropanoate + NH4(+). Functionally, involved in pyrimidine catabolism. Catalyzes the deamination of 3-aminoacrylate to malonic semialdehyde, a reaction that can also occur spontaneously. RutC may facilitate the reaction and modulate the metabolic fitness, rather than catalyzing essential functions. The sequence is that of 3-aminoacrylate deaminase RutC from Methylorubrum extorquens (strain CM4 / NCIMB 13688) (Methylobacterium extorquens).